Here is a 403-residue protein sequence, read N- to C-terminus: Farnesyl pyrophosphate synthase (403 aa).

Mg(2+) is bound by residues Asp156 and Asp160. Positions 156 to 160 (DDLAD) match the DDXXD motif motif.

The protein belongs to the FPP/GGPP synthase family. Requires Mg(2+) as cofactor.

The enzyme catalyses isopentenyl diphosphate + (2E)-geranyl diphosphate = (2Z,6E)-farnesyl diphosphate + diphosphate. It functions in the pathway pheromone biosynthesis. Farnesyl pyrophosphate synthase involved in pheromone biosynthesis by catalyzing the formation of (2Z,6E)-farnesyl diphosphate. The chain is Farnesyl pyrophosphate synthase from Nezara viridula (Southern green stink bug).